The following is a 179-amino-acid chain: UPF0227 protein PM0825 (179 aa).

This sequence belongs to the UPF0227 family.

The protein is UPF0227 protein PM0825 of Pasteurella multocida (strain Pm70).